We begin with the raw amino-acid sequence, 124 residues long: Small ribosomal subunit protein uS12 (124 aa).

The residue at position 89 (aspartate 89) is a 3-methylthioaspartic acid.

This sequence belongs to the universal ribosomal protein uS12 family. As to quaternary structure, part of the 30S ribosomal subunit. Contacts proteins S8 and S17. May interact with IF1 in the 30S initiation complex.

With S4 and S5 plays an important role in translational accuracy. In terms of biological role, interacts with and stabilizes bases of the 16S rRNA that are involved in tRNA selection in the A site and with the mRNA backbone. Located at the interface of the 30S and 50S subunits, it traverses the body of the 30S subunit contacting proteins on the other side and probably holding the rRNA structure together. The combined cluster of proteins S8, S12 and S17 appears to hold together the shoulder and platform of the 30S subunit. This Arthrobacter sp. (strain FB24) protein is Small ribosomal subunit protein uS12.